The chain runs to 95 residues: uncharacterized protein (95 aa).

The ABM domain maps to 2-92; the sequence is VREAAMLHIK…YTPFPTVEHF (91 aa).

This is an uncharacterized protein from Bacillus subtilis (strain 168).